The chain runs to 376 residues: Lipoyl synthase 1, chloroplastic (376 aa).

Residues 1–13 show a composition bias toward polar residues; sequence MIEQSLSKPSFSL. Disordered regions lie at residues 1-25 and 47-75; these read MIEQ…KSKS and IDAK…DPNV. Residues 1 to 35 constitute a chloroplast transit peptide; it reads MIEQSLSKPSFSLSIPIPQPPKSKSSFLCSYSKIR. [4Fe-4S] cluster contacts are provided by cysteine 107, cysteine 112, cysteine 118, cysteine 138, cysteine 142, cysteine 145, and serine 353. The Radical SAM core domain occupies 121 to 342; it reads GGGDGIATAT…KEYGESIGFR (222 aa).

The protein belongs to the radical SAM superfamily. Lipoyl synthase family. Requires [4Fe-4S] cluster as cofactor.

The protein localises to the plastid. It localises to the chloroplast. The enzyme catalyses [[Fe-S] cluster scaffold protein carrying a second [4Fe-4S](2+) cluster] + N(6)-octanoyl-L-lysyl-[protein] + 2 oxidized [2Fe-2S]-[ferredoxin] + 2 S-adenosyl-L-methionine + 4 H(+) = [[Fe-S] cluster scaffold protein] + N(6)-[(R)-dihydrolipoyl]-L-lysyl-[protein] + 4 Fe(3+) + 2 hydrogen sulfide + 2 5'-deoxyadenosine + 2 L-methionine + 2 reduced [2Fe-2S]-[ferredoxin]. It functions in the pathway protein modification; protein lipoylation via endogenous pathway; protein N(6)-(lipoyl)lysine from octanoyl-[acyl-carrier-protein]: step 2/2. Its function is as follows. Catalyzes the radical-mediated insertion of two sulfur atoms into the C-6 and C-8 positions of the octanoyl moiety bound to the lipoyl domains of lipoate-dependent enzymes, thereby converting the octanoylated domains into lipoylated derivatives. This is Lipoyl synthase 1, chloroplastic from Populus trichocarpa (Western balsam poplar).